The following is a 259-amino-acid chain: Acyl-[acyl-carrier-protein]--UDP-N-acetylglucosamine O-acyltransferase (259 aa).

This sequence belongs to the transferase hexapeptide repeat family. LpxA subfamily. Homotrimer.

It is found in the cytoplasm. It carries out the reaction a (3R)-hydroxyacyl-[ACP] + UDP-N-acetyl-alpha-D-glucosamine = a UDP-3-O-[(3R)-3-hydroxyacyl]-N-acetyl-alpha-D-glucosamine + holo-[ACP]. Its pathway is glycolipid biosynthesis; lipid IV(A) biosynthesis; lipid IV(A) from (3R)-3-hydroxytetradecanoyl-[acyl-carrier-protein] and UDP-N-acetyl-alpha-D-glucosamine: step 1/6. In terms of biological role, involved in the biosynthesis of lipid A, a phosphorylated glycolipid that anchors the lipopolysaccharide to the outer membrane of the cell. The polypeptide is Acyl-[acyl-carrier-protein]--UDP-N-acetylglucosamine O-acyltransferase (Psychrobacter arcticus (strain DSM 17307 / VKM B-2377 / 273-4)).